We begin with the raw amino-acid sequence, 138 residues long: Putative pre-16S rRNA nuclease (138 aa).

Belongs to the YqgF nuclease family.

It localises to the cytoplasm. Could be a nuclease involved in processing of the 5'-end of pre-16S rRNA. The polypeptide is Putative pre-16S rRNA nuclease (Salmonella dublin (strain CT_02021853)).